The sequence spans 1445 residues: 3'-5' RNA helicase YTHDC2 (1445 aa).

Positions 1–50 are disordered; the sequence is MSRPSSVSPRPPAPSGGGTGGGGGGSGGGGGGGGGGPASCGPGGGGRAKG. Over residues 15-48 the composition is skewed to gly residues; sequence SGGGTGGGGGGSGGGGGGGGGGPASCGPGGGGRA. In terms of domain architecture, R3H spans 53–121; that stretch reads DIRIDEEVKI…NRYLTVKKKD (69 aa). Residues 218–384 enclose the Helicase ATP-binding domain; the sequence is VKIIKENKVV…FGSCPVIYIQ (167 aa). 231 to 238 is a binding site for ATP; it reads GETGSGKT. Residues 331–334 carry the DEAH box motif; sequence DEVH. 2 ANK repeats span residues 521–553 and 554–586; these read TSAT…SKAS and NGWM…FGNL. The Helicase C-terminal domain occupies 627-799; sequence LLYNICHSCD…ELCLHTKLLA (173 aa). Residues serine 1104, serine 1105, and serine 1107 each carry the phosphoserine modification. A compositionally biased stretch (polar residues) spans 1179–1189; the sequence is EQSAGLQQPSG. Residues 1179 to 1303 form a disordered region; sequence EQSAGLQQPS…SPSPRPNMPI (125 aa). Over residues 1246 to 1264 the composition is skewed to basic and acidic residues; it reads KYKDRGILHPKRSTDDRSD. A compositionally biased stretch (low complexity) spans 1265-1279; the sequence is QSSVKSTDSSSYPSP. A phosphoserine mark is found at serine 1278, serine 1282, and serine 1296. Residues 1303–1433 enclose the YTH domain; the sequence is IRYFIMKSSN…QVGEQLLQLW (131 aa). Residues 1309–1311, tryptophan 1325, and tryptophan 1375 contribute to the RNA site; that span reads KSS.

Belongs to the DEAD box helicase family. DEAH subfamily. As to quaternary structure, interacts with MEIOC; binds transcripts that regulate the mitotic cell cycle inhibiting progression into metaphase, thereby allowing meiotic prophase to proceed normally. Interacts (via ANK repeats) with XRN1. Interacts with ZCCHC4. Associates with the small ribosomal subunit. Interacts with RBM46. Present in male and female germ cells (at protein level). Highly expressed in testis. Not detected in spermatogonia next to the tubule wall but is strongly expressed in spermatocytes, suggesting that it is up-regulated in germ cells upon entry into meiosis (at protein level).

It is found in the cytoplasm. Its subcellular location is the perinuclear region. It carries out the reaction ATP + H2O = ADP + phosphate + H(+). Its function is as follows. 3'-5' RNA helicase that plays a key role in the male and female germline by promoting transition from mitotic to meiotic divisions in stem cells. Specifically recognizes and binds N6-methyladenosine (m6A)-containing RNAs, a modification present at internal sites of mRNAs and some non-coding RNAs that plays a role in the efficiency of RNA processing and stability. Essential for ensuring a successful progression of the meiotic program in the germline by regulating the level of m6A-containing RNAs. Acts by binding and promoting degradation of m6A-containing mRNAs: the 3'-5' RNA helicase activity is required for this process and RNA degradation may be mediated by XRN1 exoribonuclease. Required for both spermatogenesis and oogenesis. The polypeptide is 3'-5' RNA helicase YTHDC2 (Mus musculus (Mouse)).